The following is a 473-amino-acid chain: Sensor histidine kinase GtrS (473 aa).

Over 1 to 8 (MPRSLLGR) the chain is Cytoplasmic. Residues 9–29 (MLLLTLLAVLVAQGLSSLFWL) traverse the membrane as a helical segment. The Periplasmic segment spans residues 30 to 197 (SHLRSSQREG…LEPEGLQPQQ (168 aa)). Residues 198-218 (VLSIVFTSLLLLLFTGLLMHW) form a helical membrane-spanning segment. Residues 217–269 (HWQSRPLKRLARAARDLALGSPSAALEERGASELVEVARAFNTMHERIDRYLN) form the HAMP domain. At 219-473 (QSRPLKRLAR…SLRLPRLGLE (255 aa)) the chain is on the cytoplasmic side. The Histidine kinase domain maps to 277–471 (AISHDLRTPI…RVSLRLPRLG (195 aa)). His-280 is modified (phosphohistidine; by autocatalysis).

Post-translationally, autophosphorylated.

Its subcellular location is the cell inner membrane. The catalysed reaction is ATP + protein L-histidine = ADP + protein N-phospho-L-histidine.. Its function is as follows. Member of the two-component regulatory system GtrS/GltR involved in the regulation of glucose metabolism and transport, as well as regulation of the exotoxin A gene expression. GtrS recognizes and binds 2-ketogluconate and 6-phosphogluconate via its sensor domain, which accelerates GtrS autophosphorylation and concomitant transphosphorylation and regulation of the response regulator GltR. In terms of biological role, plays a key role during bacteria-host interactions and is required for optimal colonization and dissemination in a mouse model of infection. Contributes to modulation of the type III secretion system (T3SS) in response to host cells via the regulation of the OprB transport system. The chain is Sensor histidine kinase GtrS from Pseudomonas aeruginosa (strain ATCC 15692 / DSM 22644 / CIP 104116 / JCM 14847 / LMG 12228 / 1C / PRS 101 / PAO1).